Here is a 1074-residue protein sequence, read N- to C-terminus: Pleckstrin homology domain-containing family M member 1 (1074 aa).

The region spanning 40–182 (TSEDGDANTM…LSFELSYKSA (143 aa)) is the RUN domain. Disordered stretches follow at residues 214–244 (QRKE…RRNR), 272–336 (LQEN…MFQT), and 382–454 (DEKQ…PPQE). A Phosphoserine modification is found at serine 218. 2 stretches are compositionally biased toward polar residues: residues 313–329 (SKAQ…NQEP) and 393–404 (PAQSTSDQQPSS). Residues serine 433, serine 436, and serine 491 each carry the phosphoserine modification. Residues 506 to 526 (GNAQPAPAPAPAPAPAPAPAP) are disordered. Residues 511-525 (APAPAPAPAPAPAPA) are compositionally biased toward pro residues. The region spanning 551 to 642 (GLMKLGTVAR…WLDRVREALQ (92 aa)) is the PH 1 domain. An LIR motif is present at residues 649 to 655 (EDEWVNI). Residues 661–680 (AEDAPEAPPDSLPPYSTLLP) form a disordered region. The segment at 672 to 1074 (LPPYSTLLPE…RKYQEQNVVS (403 aa)) is interaction with RAB7A. The PH 2 domain occupies 701–795 (DAIKESLLYL…WRDLVRKVLA (95 aa)). The Phorbol-ester/DAG-type zinc-finger motif lies at 1004 to 1058 (QHVYHCDLCTQRGFICQICHHQDIIFPFEFDTTVRCAECRTVFHQSCQAVVRKGC).

Interacts (via N- and C-terminus) with RAB7A (GTP-bound form). Simultaneously interacts with RAB7A and ARL8B; bringing about clustering and fusion of late endosomes and lysosomes. Interacts (via RUN domain) with ARL8B (GTP-bound form); the interaction is required for PLEKHM1 localization to lysosomes and for ARL8B function in delivery and degradation of endocytic and autophagic cargo in lysosomes. PLEKHM1 and PLEKHM2 compete for interaction with ARL8B. Interacts with ARL8A; the interaction is weaker than with ARL8B. Interacts with VPS41, VPS11, VPS18, VPS33A and VPS39; indicative for an association with the HOPS complex; the interactions with, at least, VPS41, VPS11, VPS18 and VPS33A require ARL8B. Interacts with GABARAP, GABARAPL, GABARAPL2, MAP1LC3A, MAP1LC3B and MAP1LC3C. Interacts with PAFAH1B. Interacts (via N- and C-terminus) with NDEL1. Interacts (via C-terminus) with MAP3K7. Interacts (via N- and C-terminus) with FAM98A. Interacts (via C-terminus) with DEF8; this interaction is weak but increased in a RAB7A-dependent manner. May interact with sialyl-lex-positive protein.

Its subcellular location is the autolysosome membrane. It localises to the endosome membrane. It is found in the late endosome membrane. The protein localises to the lysosome membrane. In terms of biological role, acts as a multivalent adapter protein that regulates Rab7-dependent and HOPS complex-dependent fusion events in the endolysosomal system and couples autophagic and the endocytic trafficking pathways. Acts as a dual effector of RAB7A and ARL8B that simultaneously binds these GTPases, bringing about clustering and fusion of late endosomes and lysosomes. Required for late stages of endolysosomal maturation, facilitating both endocytosis-mediated degradation of growth factor receptors and autophagosome clearance. Interaction with Arl8b is a crucial factor in the terminal maturation of autophagosomes and to mediate autophagosome-lysosome fusion. Positively regulates lysosome peripheral distribution and ruffled border formation in osteoclasts. May be involved in negative regulation of endocytic transport from early endosome to late endosome/lysosome implicating its association with Rab7. May have a role in sialyl-lex-mediated transduction of apoptotic signals. Involved in bone resorption. The chain is Pleckstrin homology domain-containing family M member 1 from Mus musculus (Mouse).